We begin with the raw amino-acid sequence, 101 residues long: Small ribosomal subunit protein uS14 (101 aa).

This sequence belongs to the universal ribosomal protein uS14 family. In terms of assembly, part of the 30S ribosomal subunit. Contacts proteins S3 and S10.

Binds 16S rRNA, required for the assembly of 30S particles and may also be responsible for determining the conformation of the 16S rRNA at the A site. This chain is Small ribosomal subunit protein uS14, found in Maricaulis maris (strain MCS10) (Caulobacter maris).